Consider the following 229-residue polypeptide: Urease accessory protein UreF (229 aa).

Belongs to the UreF family. UreD, UreF and UreG form a complex that acts as a GTP-hydrolysis-dependent molecular chaperone, activating the urease apoprotein by helping to assemble the nickel containing metallocenter of UreC. The UreE protein probably delivers the nickel.

The protein localises to the cytoplasm. Functionally, required for maturation of urease via the functional incorporation of the urease nickel metallocenter. This Staphylococcus aureus (strain JH1) protein is Urease accessory protein UreF.